Here is an 896-residue protein sequence, read N- to C-terminus: Protein translocase subunit SecA (896 aa).

ATP-binding positions include Gln87, 105–109 (GEGKT), and Asp512. Residues 858–886 (RAGGEAEAAKPVVRDEKKVGRNDPCPCGS) form a disordered region. Positions 869–878 (VVRDEKKVGR) are enriched in basic and acidic residues. Residues Cys882, Cys884, Cys893, and Cys894 each contribute to the Zn(2+) site.

The protein belongs to the SecA family. Monomer and homodimer. Part of the essential Sec protein translocation apparatus which comprises SecA, SecYEG and auxiliary proteins SecDF-YajC and YidC. The cofactor is Zn(2+).

It is found in the cell inner membrane. The protein localises to the cytoplasm. It carries out the reaction ATP + H2O + cellular proteinSide 1 = ADP + phosphate + cellular proteinSide 2.. Its function is as follows. Part of the Sec protein translocase complex. Interacts with the SecYEG preprotein conducting channel. Has a central role in coupling the hydrolysis of ATP to the transfer of proteins into and across the cell membrane, serving as an ATP-driven molecular motor driving the stepwise translocation of polypeptide chains across the membrane. The chain is Protein translocase subunit SecA from Syntrophotalea carbinolica (strain DSM 2380 / NBRC 103641 / GraBd1) (Pelobacter carbinolicus).